Here is a 163-residue protein sequence, read N- to C-terminus: 3-isopropylmalate dehydratase small subunit 2 (163 aa).

It belongs to the LeuD family. LeuD type 2 subfamily. In terms of assembly, heterodimer of LeuC and LeuD.

It catalyses the reaction (2R,3S)-3-isopropylmalate = (2S)-2-isopropylmalate. Its pathway is amino-acid biosynthesis; L-leucine biosynthesis; L-leucine from 3-methyl-2-oxobutanoate: step 2/4. Catalyzes the isomerization between 2-isopropylmalate and 3-isopropylmalate, via the formation of 2-isopropylmaleate. This is 3-isopropylmalate dehydratase small subunit 2 (leuD2) from Pyrococcus abyssi (strain GE5 / Orsay).